Reading from the N-terminus, the 251-residue chain is Hydroxypyruvate/pyruvate aldolase (251 aa).

His44 acts as the Proton acceptor in catalysis. Residue Arg69 participates in 3-hydroxypyruvate binding. Glu145 is a binding site for Mg(2+). Thr170 and Asp171 together coordinate 3-hydroxypyruvate. Mg(2+) is bound at residue Asp171.

Belongs to the HpcH/HpaI aldolase family. In terms of assembly, homohexamer. Trimer of homodimers. Requires Mn(2+) as cofactor. It depends on Mg(2+) as a cofactor. Co(2+) serves as cofactor. Zn(2+) is required as a cofactor.

The catalysed reaction is D-glyceraldehyde + 3-hydroxypyruvate = 2-dehydro-D-galactonate. It catalyses the reaction D-glyceraldehyde + pyruvate = 2-dehydro-3-deoxy-L-galactonate. It carries out the reaction L-glyceraldehyde + 3-hydroxypyruvate = (3S,4S,5S)-3,4,5,6-tetrahydroxy-2-oxohexanoate. The enzyme catalyses (R)-lactaldehyde + 3-hydroxypyruvate = (3S,4S,5R)-3,4,5-trihydroxy-2-oxohexanoate. The catalysed reaction is (R)-lactaldehyde + 3-hydroxypyruvate = (3S,4R,5R)-3,4,5-trihydroxy-2-oxohexanoate. It catalyses the reaction (S)-lactaldehyde + 3-hydroxypyruvate = (3S,4S,5S)-3,4,5-trihydroxy-2-oxohexanoate. It carries out the reaction D-erythrose + 3-hydroxypyruvate = (3S,4S,5R,6R)-3,4,5,6,7-pentahydroxy-2-oxoheptanoate. Its activity is regulated as follows. Binding of substrate induces a dynamic movement of the metal cofactor between an inactive coordination sphere to a catalytically active one. When oxaloacetate is used as substrate, activity is increased in the presence of micromolar concentrations of inorganic phosphate. The phosphate does not improve the binding of the substrate, but exclusively increases its rate of decarboxylation. Excessive phosphate concentrations negatively affect the reaction rate by removing the metal cofactor. In terms of biological role, aldolase which can catalyze in vitro the aldolisation reaction between hydroxypyruvate (HPA) or pyruvate (PA) and D-glyceraldehyde (D-GA). The condensation of hydroxypyruvate and D-glyceraldehyde produces 2-dehydro-D-galactonate as the major product. The condensation of pyruvate and D-glyceraldehyde produces 2-dehydro-3-deoxy-L-galactonate. Can use other electrophilic substrates such as L-glyceraldehyde, D- and L-lactaldehyde and D-erythrose. Also catalyzes the retro-aldol type decarboxylation of oxaloacetate, a general property of known pyruvate aldolases. In Rhizorhabdus wittichii (strain DSM 6014 / CCUG 31198 / JCM 15750 / NBRC 105917 / EY 4224 / RW1) (Sphingomonas wittichii), this protein is Hydroxypyruvate/pyruvate aldolase.